A 217-amino-acid chain; its full sequence is Deoxyribose-phosphate aldolase (217 aa).

The active-site Proton donor/acceptor is the Asp-89. The active-site Schiff-base intermediate with acetaldehyde is Lys-151. Lys-180 serves as the catalytic Proton donor/acceptor.

The protein belongs to the DeoC/FbaB aldolase family. DeoC type 1 subfamily.

It is found in the cytoplasm. It catalyses the reaction 2-deoxy-D-ribose 5-phosphate = D-glyceraldehyde 3-phosphate + acetaldehyde. It participates in carbohydrate degradation; 2-deoxy-D-ribose 1-phosphate degradation; D-glyceraldehyde 3-phosphate and acetaldehyde from 2-deoxy-alpha-D-ribose 1-phosphate: step 2/2. Its function is as follows. Catalyzes a reversible aldol reaction between acetaldehyde and D-glyceraldehyde 3-phosphate to generate 2-deoxy-D-ribose 5-phosphate. This Metamycoplasma arthritidis (strain 158L3-1) (Mycoplasma arthritidis) protein is Deoxyribose-phosphate aldolase.